Consider the following 675-residue polypeptide: Transketolase, chloroplastic (675 aa).

Thiamine diphosphate-binding positions include histidine 78 and 127 to 129 (GPL). Residue aspartate 168 participates in Mg(2+) binding. Residues glycine 169, glutamate 173, and asparagine 198 each coordinate thiamine diphosphate. Positions 198 and 200 each coordinate Mg(2+). Histidine 275 serves as a coordination point for thiamine diphosphate. Substrate is bound by residues histidine 275, arginine 369, and serine 396. Thiamine diphosphate is bound by residues glutamate 423 and 450–453 (FTDY). Glutamate 423 (proton donor) is an active-site residue. The substrate site is built by histidine 474, aspartate 482, and arginine 533.

Homodimer. Requires Mg(2+) as cofactor. The cofactor is Ca(2+). Mn(2+) is required as a cofactor. It depends on Co(2+) as a cofactor. Thiamine diphosphate serves as cofactor.

It is found in the plastid. It localises to the chloroplast thylakoid membrane. The enzyme catalyses D-sedoheptulose 7-phosphate + D-glyceraldehyde 3-phosphate = aldehydo-D-ribose 5-phosphate + D-xylulose 5-phosphate. It participates in carbohydrate biosynthesis; Calvin cycle. Functionally, catalyzes the reversible transfer of a two-carbon ketol group from fructose-6-phosphate or sedoheptulose-7-phosphate to glyceraldehyde-3-phosphate to yield xylulose-5-phosphate and erythrose-4-phosphate or ribose-5-phosphate, respectively. This chain is Transketolase, chloroplastic, found in Zea mays (Maize).